A 420-amino-acid polypeptide reads, in one-letter code: Pregnancy-associated glycoprotein 2 (420 aa).

Residues 1–15 (MKWLVILGLVALSDC) form the signal peptide. N-linked (GlcNAc...) asparagine glycosylation is found at asparagine 56 and asparagine 79. Residues 76 to 417 (YVGNISIGTP…DEGQNRIGLA (342 aa)) enclose the Peptidase A1 domain. The active site involves aspartate 94. 2 disulfide bridges follow: cysteine 107–cysteine 112 and cysteine 268–cysteine 272. Residue aspartate 277 is part of the active site. Cysteine 341 and cysteine 376 are disulfide-bonded.

Belongs to the peptidase A1 family. Expressed throughout the chorion, with the signal localized exclusively over the trophectoderm.

The protein resides in the secreted. The protein localises to the extracellular space. This is Pregnancy-associated glycoprotein 2 (PAG2) from Sus scrofa (Pig).